The chain runs to 349 residues: NADH-quinone oxidoreductase subunit H (349 aa).

8 helical membrane passes run 16 to 36 (WPVV…MGCV), 88 to 108 (GLFI…WAVV), 123 to 143 (LLFL…AGWA), 157 to 177 (AAQM…VLLI), 202 to 222 (FLSW…ISGI), 264 to 284 (ILVS…PVGF), 285 to 305 (LPDG…IFLW), and 325 to 345 (VFIP…MSPL).

It belongs to the complex I subunit 1 family. As to quaternary structure, NDH-1 is composed of 14 different subunits. Subunits NuoA, H, J, K, L, M, N constitute the membrane sector of the complex.

The protein localises to the cell inner membrane. The catalysed reaction is a quinone + NADH + 5 H(+)(in) = a quinol + NAD(+) + 4 H(+)(out). In terms of biological role, NDH-1 shuttles electrons from NADH, via FMN and iron-sulfur (Fe-S) centers, to quinones in the respiratory chain. The immediate electron acceptor for the enzyme in this species is believed to be ubiquinone. Couples the redox reaction to proton translocation (for every two electrons transferred, four hydrogen ions are translocated across the cytoplasmic membrane), and thus conserves the redox energy in a proton gradient. This subunit may bind ubiquinone. The chain is NADH-quinone oxidoreductase subunit H from Azoarcus sp. (strain BH72).